We begin with the raw amino-acid sequence, 359 residues long: Cytoplasmic tRNA 2-thiolation protein 1 (359 aa).

This sequence belongs to the TtcA family. CTU1/NCS6/ATPBD3 subfamily. Interacts with NCS2 and URM1. May act by forming a heterodimer with NCS2. Component of a large molecular weight complex of more than 250 kDa.

The protein resides in the cytoplasm. Its subcellular location is the mitochondrion. The protein operates within tRNA modification; 5-methoxycarbonylmethyl-2-thiouridine-tRNA biosynthesis. In terms of biological role, plays a central role in 2-thiolation of mcm(5)S(2)U at tRNA wobble positions of tRNA(Lys), tRNA(Glu) and tRNA(Gln). Directly binds tRNAs and probably acts by catalyzing adenylation of tRNAs, an intermediate required for 2-thiolation. It is unclear whether it acts as a sulfurtransferase that transfers sulfur from thiocarboxylated URM1 onto the uridine of tRNAs at wobble position. Prior mcm(5) tRNA modification by the elongator complex is required for 2-thiolation. May also be involved in protein urmylation. This Saccharomyces cerevisiae (strain RM11-1a) (Baker's yeast) protein is Cytoplasmic tRNA 2-thiolation protein 1.